Here is a 209-residue protein sequence, read N- to C-terminus: Mitochondrial import inner membrane translocase subunit Tim23 (209 aa).

A run of 3 helical transmembrane segments spans residues 73–93 (FELA…FGAM), 125–145 (ALWA…GVII), and 181–197 (GLAG…YNNW).

It belongs to the Tim17/Tim22/Tim23 family. Component of the TIM23 complex at least composed of TIMM23, TIMM17 (TIMM17A or TIMM17B) and TIMM50; within this complex, directly interacts with TIMM50. The complex interacts with the TIMM44 component of the PAM complex and with DNAJC15. Upon mitochondrial depolarization, interacts with PINK1; the interaction is required for PINK1 accumulation at the outer mitochondrial membrane, kinase activation by autophosphorylation and PRKN recruitement to mitochondria.

The protein resides in the mitochondrion inner membrane. Essential component of the TIM23 complex, a complex that mediates the translocation of transit peptide-containing proteins across the mitochondrial inner membrane. Has a role in the activation of stress-induced mitophagy by protecting PINK1 from OMA1-mediated degradation and facilitating its accumulation at the outer mitochondrial membrane in response to depolarization. The polypeptide is Mitochondrial import inner membrane translocase subunit Tim23 (Timm23) (Mus musculus (Mouse)).